We begin with the raw amino-acid sequence, 399 residues long: Protein DDI1 homolog 2 (399 aa).

The Ubiquitin-like domain occupies 1–81; that stretch reads MLLTVYCVRR…VILRQKENAD (81 aa). Positions 99-134 are disordered; that stretch reads IAVPGTSSPRQRQPPGTQQSHSSPGEITSSPQGLDN. Positions 103–131 are enriched in polar residues; that stretch reads GTSSPRQRQPPGTQQSHSSPGEITSSPQG. Thr-104 carries the post-translational modification Phosphothreonine. 5 positions are modified to phosphoserine: Ser-106, Ser-121, Ser-128, Ser-150, and Ser-194. The active site involves Asp-252. A Ubiquitin-binding motif is present at residues 376–395; it reads EEIADQELAEALQKSAEDAE.

Belongs to the DDI1 family. As to quaternary structure, homodimer. Interacts with MCM6; PCNA; PSMD4; PSMD8; RPA2 and RPN2. Interacts with RTF2.

Its subcellular location is the cytoplasm. The protein localises to the cytosol. It is found in the chromosome. Functionally, aspartic protease that mediates the cleavage of NFE2L1/NRF1 at 'Leu-104', thereby promoting release of NFE2L1/NRF1 from the endoplasmic reticulum membrane. Ubiquitination of NFE2L1/NRF1 is a prerequisite for cleavage, suggesting that DDI2 specifically recognizes and binds ubiquitinated NFE2L1/NRF1. Seems to act as a proteasomal shuttle which links the proteasome and replication fork proteins like RTF2. Required, with DDI1, for cellular survival following replication stress. Together or redudantly with DDI1, removes RTF2 from stalled forks to allow cell cycle progression after replication stress and maintains genome integrity. The sequence is that of Protein DDI1 homolog 2 from Homo sapiens (Human).